A 90-amino-acid chain; its full sequence is U7-theraphotoxin-Hhn1a 5 (90 aa).

Positions 1-19 (MKTAIFTVVLALAVFAVLS) are cleaved as a signal peptide. Positions 20 to 50 (FGWEANEKALSEESTELIHEKEAASETEARE) are excised as a propeptide. Disulfide bonds link cysteine 51/cysteine 65, cysteine 58/cysteine 70, and cysteine 64/cysteine 81.

It belongs to the neurotoxin 10 (Hwtx-1) family. 13 (Hntx-13) subfamily. As to expression, expressed by the venom gland.

The protein resides in the secreted. Functionally, ion channel inhibitor. This Cyriopagopus hainanus (Chinese bird spider) protein is U7-theraphotoxin-Hhn1a 5.